Consider the following 115-residue polypeptide: Large ribosomal subunit protein bL19 (115 aa).

This sequence belongs to the bacterial ribosomal protein bL19 family.

This protein is located at the 30S-50S ribosomal subunit interface and may play a role in the structure and function of the aminoacyl-tRNA binding site. The polypeptide is Large ribosomal subunit protein bL19 (Wigglesworthia glossinidia brevipalpis).